Consider the following 330-residue polypeptide: tRNA pseudouridine synthase B (330 aa).

Aspartate 42 functions as the Nucleophile in the catalytic mechanism.

The protein belongs to the pseudouridine synthase TruB family. Type 1 subfamily.

The enzyme catalyses uridine(55) in tRNA = pseudouridine(55) in tRNA. In terms of biological role, responsible for synthesis of pseudouridine from uracil-55 in the psi GC loop of transfer RNAs. This chain is tRNA pseudouridine synthase B, found in Lactococcus lactis subsp. cremoris (strain SK11).